We begin with the raw amino-acid sequence, 329 residues long: MKFGSIVLIAAAAGSAVAAPAKRASVFQWFGSNESGAEFGQNTIPGSYGKEFIFPDPSTISTLIGKGMNIFRVQFLMERLVPSSMTGSYNEEYLANLTSVVDAVTKAGSYAILDPHNFGRYNGQIISSTDDFKTFWQNLAGKFKSNNLVIFDTNNEYHDMDQALVLNLNQAAINGIRAAGATSQYIFVEGNSWSGAWTWVDVNDNLKALTDPQDKIVYEMHQYLDSDGSGTSESCVSTTIGKERVTAATKWLKDNGKVGIIGEFAGGVNDQCRTAISGMLEYLAQNTDVWKGALWWAAGPWWGNYMFNMEPPSGAAYVGMLDILEPYLG.

An N-terminal signal peptide occupies residues methionine 1 to alanine 18. Asparagine 33 and asparagine 96 each carry an N-linked (GlcNAc...) asparagine glycan. The active-site Proton donor is glutamate 156. The Nucleophile role is filled by glutamate 263.

This sequence belongs to the glycosyl hydrolase 5 (cellulase A) family.

It is found in the secreted. It catalyses the reaction Endohydrolysis of (1-&gt;4)-beta-D-glucosidic linkages in cellulose, lichenin and cereal beta-D-glucans.. Its function is as follows. Has endoglucanase activity on substrates containing beta-1,4 glycosidic bonds, like in carboxymethylcellulose (CMC), hydroxyethylcellulose (HEC) and beta-glucan. Involved in the degradation of complex natural cellulosic substrates. In Neosartorya fischeri (strain ATCC 1020 / DSM 3700 / CBS 544.65 / FGSC A1164 / JCM 1740 / NRRL 181 / WB 181) (Aspergillus fischerianus), this protein is Probable endo-beta-1,4-glucanase B (eglB).